A 176-amino-acid polypeptide reads, in one-letter code: Large ribosomal subunit protein eL20A (176 aa).

Belongs to the eukaryotic ribosomal protein eL20 family. In terms of assembly, component of the large ribosomal subunit (LSU). Mature yeast ribosomes consist of a small (40S) and a large (60S) subunit. The 40S small subunit contains 1 molecule of ribosomal RNA (18S rRNA) and at least 33 different proteins. The large 60S subunit contains 3 rRNA molecules (25S, 5.8S and 5S rRNA) and at least 46 different proteins. eL20 forms multiple interactions with RNA and proteins in the central protuberance, connecting components of core functional centers that are located far apart.

It localises to the cytoplasm. Component of the ribosome, a large ribonucleoprotein complex responsible for the synthesis of proteins in the cell. The small ribosomal subunit (SSU) binds messenger RNAs (mRNAs) and translates the encoded message by selecting cognate aminoacyl-transfer RNA (tRNA) molecules. The large subunit (LSU) contains the ribosomal catalytic site termed the peptidyl transferase center (PTC), which catalyzes the formation of peptide bonds, thereby polymerizing the amino acids delivered by tRNAs into a polypeptide chain. The nascent polypeptides leave the ribosome through a tunnel in the LSU and interact with protein factors that function in enzymatic processing, targeting, and the membrane insertion of nascent chains at the exit of the ribosomal tunnel. This Schizosaccharomyces pombe (strain 972 / ATCC 24843) (Fission yeast) protein is Large ribosomal subunit protein eL20A (rpl2001).